The chain runs to 65 residues: Large ribosomal subunit protein bL35 (65 aa).

The protein belongs to the bacterial ribosomal protein bL35 family.

The protein is Large ribosomal subunit protein bL35 of Desulforapulum autotrophicum (strain ATCC 43914 / DSM 3382 / VKM B-1955 / HRM2) (Desulfobacterium autotrophicum).